We begin with the raw amino-acid sequence, 74 residues long: Lambda-hexatoxin-Hv1e (74 aa).

An N-terminal signal peptide occupies residues 1–22; sequence MNTATCFIVLLVVATVIGGIEA. A propeptide spanning residues 23–35 is cleaved from the precursor; it reads GEFDMRKDVMGLF. 4 cysteine pairs are disulfide-bonded: Cys40–Cys54, Cys47–Cys59, Cys50–Cys51, and Cys53–Cys69.

This sequence belongs to the neurotoxin 11 (kappa toxin) family. As to expression, expressed by the venom gland.

The protein resides in the secreted. In terms of biological role, this excitatory toxin inhibits insect calcium-activated potassium (KCa) channels (Slo-type). This is Lambda-hexatoxin-Hv1e from Hadronyche versuta (Blue mountains funnel-web spider).